A 357-amino-acid polypeptide reads, in one-letter code: Aspartate carbamoyltransferase catalytic subunit (357 aa).

A compositionally biased stretch (polar residues) spans 1–15 (MSNSIDSQSLPTVSP). Positions 1–21 (MSNSIDSQSLPTVSPTDYARF) are disordered. Residues R97 and T98 each coordinate carbamoyl phosphate. K125 is a binding site for L-aspartate. Residues R147, H177, and Q180 each coordinate carbamoyl phosphate. L-aspartate-binding residues include R211 and R266. Residues G307 and P308 each coordinate carbamoyl phosphate.

It belongs to the aspartate/ornithine carbamoyltransferase superfamily. ATCase family. In terms of assembly, heterododecamer (2C3:3R2) of six catalytic PyrB chains organized as two trimers (C3), and six regulatory PyrI chains organized as three dimers (R2).

The catalysed reaction is carbamoyl phosphate + L-aspartate = N-carbamoyl-L-aspartate + phosphate + H(+). Its pathway is pyrimidine metabolism; UMP biosynthesis via de novo pathway; (S)-dihydroorotate from bicarbonate: step 2/3. Functionally, catalyzes the condensation of carbamoyl phosphate and aspartate to form carbamoyl aspartate and inorganic phosphate, the committed step in the de novo pyrimidine nucleotide biosynthesis pathway. This chain is Aspartate carbamoyltransferase catalytic subunit, found in Psychrobacter cryohalolentis (strain ATCC BAA-1226 / DSM 17306 / VKM B-2378 / K5).